Here is a 252-residue protein sequence, read N- to C-terminus: Gastrula zinc finger protein XlCGF28.1 (252 aa).

C2H2-type zinc fingers lie at residues 6–28, 34–56, 62–84, 90–112, 118–140, 146–168, 174–196, 202–224, and 230–252; these read FTCN…LRSH, FTCS…FRGH, SACT…IRSH, YTCT…VRSH, FKCT…LRFH, TTCS…FRVH, FTCT…SYLH, YTCT…SYLH, and FTCT…SHTH.

This sequence belongs to the krueppel C2H2-type zinc-finger protein family.

The protein resides in the nucleus. Functionally, may be involved in transcriptional regulation. In Xenopus laevis (African clawed frog), this protein is Gastrula zinc finger protein XlCGF28.1.